Here is a 349-residue protein sequence, read N- to C-terminus: S-adenosylmethionine decarboxylase proenzyme 3 (349 aa).

Catalysis depends on residues Glu9 and Glu12. Glu68 is a substrate binding site. The active-site Schiff-base intermediate with substrate; via pyruvic acid is Ser69. Ser69 carries the post-translational modification Pyruvic acid (Ser); by autocatalysis. The Proton donor; for catalytic activity role is filled by Cys83. Active-site proton acceptor; for processing activity residues include Ser235 and His248. Glu252 contributes to the substrate binding site.

The protein belongs to the eukaryotic AdoMetDC family. It depends on pyruvate as a cofactor. In terms of processing, is synthesized initially as an inactive proenzyme. Formation of the active enzyme involves a self-maturation process in which the active site pyruvoyl group is generated from an internal serine residue via an autocatalytic post-translational modification. Two non-identical subunits are generated from the proenzyme in this reaction, and the pyruvate is formed at the N-terminus of the alpha chain, which is derived from the carboxyl end of the proenzyme. The post-translation cleavage follows an unusual pathway, termed non-hydrolytic serinolysis, in which the side chain hydroxyl group of the serine supplies its oxygen atom to form the C-terminus of the beta chain, while the remainder of the serine residue undergoes an oxidative deamination to produce ammonia and the pyruvoyl group blocking the N-terminus of the alpha chain.

It carries out the reaction S-adenosyl-L-methionine + H(+) = S-adenosyl 3-(methylsulfanyl)propylamine + CO2. Its pathway is amine and polyamine biosynthesis; S-adenosylmethioninamine biosynthesis; S-adenosylmethioninamine from S-adenosyl-L-methionine: step 1/1. Its function is as follows. Essential for biosynthesis of the polyamines spermidine and spermine. Essential for polyamine homeostasis, and normal plant embryogenesis, growth and development. The polypeptide is S-adenosylmethionine decarboxylase proenzyme 3 (Arabidopsis thaliana (Mouse-ear cress)).